Here is a 1045-residue protein sequence, read N- to C-terminus: Unconventional myosin-Ia (1045 aa).

Residues 11–697 enclose the Myosin motor domain; the sequence is AAVGDLVMLD…TLFDLEKRRQ (687 aa). Residue 104–111 participates in ATP binding; it reads GESGAGKT. The actin-binding stretch occupies residues 574-596; the sequence is VATLMKNLYSKNPNYIRCIKPND. IQ domains lie at 701 to 727, 723 to 750, and 746 to 774; these read AELA…RKSQ, MRKS…KRSV, and MKRS…RSDA. Positions 861–1044 constitute a TH1 domain; the sequence is KALYAQSLQQ…RGSHKMEILV (184 aa).

This sequence belongs to the TRAFAC class myosin-kinesin ATPase superfamily. Myosin family. As to expression, intestine.

In terms of biological role, could play an important role in morphogenesis and function of intestinal microvilli. The chain is Unconventional myosin-Ia (MYO1A) from Gallus gallus (Chicken).